The primary structure comprises 83 residues: Conotoxin Im22.1 (83 aa).

The first 18 residues, 1 to 18 (MMMRVFIAMFFLLALVEA), serve as a signal peptide directing secretion. Positions 19 to 26 (GWPRLYDK) are excised as a propeptide.

Belongs to the conotoxin E superfamily. Post-translationally, contain 4 disulfide bonds. As to expression, expressed by the venom duct.

The protein localises to the secreted. Functionally, probable neurotoxin. The chain is Conotoxin Im22.1 from Conus imperialis (Imperial cone).